The primary structure comprises 198 residues: Auxin-binding protein 1 (198 aa).

An N-terminal signal peptide occupies residues 1-33 (MIVLSVGSASSSPIVVVFSVALLLFYFSETSLG). C36 and C189 form a disulfide bridge. 3 residues coordinate Zn(2+): H92, H94, and E98. N130 carries N-linked (GlcNAc...) asparagine glycosylation. H141 contributes to the Zn(2+) binding site. Positions 195 to 198 (KDEL) match the Prevents secretion from ER motif.

In terms of assembly, homodimer. May interact with the GPI-anchored plasma membrane protein SKU5 and its family members. Interacts with TMK1 (via extracellular domain). Post-translationally, glycosylated. In terms of processing, ubiquitinated by RMA2, leading to proteasomal degradation.

It localises to the endoplasmic reticulum lumen. The protein resides in the cell membrane. Auxin receptor that controls cell elongation and cell division. Involved in embryonic morphogenesis. Acts on the cell cycle, endocycle, cell plate formation, and cell expansion and contributes to the control of auxin-related gene expression. Controls root meristem size and mediates auxin responsiveness. Involved in activation of ROP GTPases in response to auxin and regulation of clathrin-mediated endocytosis in roots. Acts as a positive factor in clathrin recruitment to the plasma membrane, thereby promoting endocytosis. Upon auxin binding, restricts the internalization of PIN proteins by inhibiting clathrin-mediated endocytosis. Promotes auxin-triggered phosphorylation status modulation of RAF-like kinases (e.g. RAF20 and RAF24). Involved in the regulation of polar auxin transport. Behaves as a negative regulator of the SCF(TIR1/AFB) signaling pathway, protecting AUX/IAA repressors from degradation. Regulates the expression of cell wall remodeling genes via an SCF(TIR1/AFB)-dependent pathway. Involved in the modulation of hemicellulose xyloglucan structure. Required for rapid auxin-mediated re-orientation of microtubules to regulate cell elongation in roots and dark-grown hypocotyls as well as asymmetric growth during gravitropic responses. Involved in the shade avoidance response. Forms with TMK1 a cell surface auxin perception complex that activates ROP signaling pathways. ABP1 sensing of auxin is important for the ABP1-TMK1 complex formation. Interacts functionally with phytochrome to regulate growth. The protein is Auxin-binding protein 1 of Arabidopsis thaliana (Mouse-ear cress).